Consider the following 607-residue polypeptide: Elongation factor 4 (607 aa).

One can recognise a tr-type G domain in the interval glutamate 11–glutamate 193. GTP is bound by residues aspartate 23–threonine 28 and asparagine 140–aspartate 143.

This sequence belongs to the TRAFAC class translation factor GTPase superfamily. Classic translation factor GTPase family. LepA subfamily.

The protein resides in the cell membrane. The enzyme catalyses GTP + H2O = GDP + phosphate + H(+). In terms of biological role, required for accurate and efficient protein synthesis under certain stress conditions. May act as a fidelity factor of the translation reaction, by catalyzing a one-codon backward translocation of tRNAs on improperly translocated ribosomes. Back-translocation proceeds from a post-translocation (POST) complex to a pre-translocation (PRE) complex, thus giving elongation factor G a second chance to translocate the tRNAs correctly. Binds to ribosomes in a GTP-dependent manner. This Staphylococcus haemolyticus (strain JCSC1435) protein is Elongation factor 4.